We begin with the raw amino-acid sequence, 127 residues long: uncharacterized protein (127 aa).

Residues 1 to 17 (MQGSVQIQKGNISSSYT) show a composition bias toward polar residues. Positions 1–36 (MQGSVQIQKGNISSSYTPEKHPSHPTSANGSMSPKR) are disordered.

This is an uncharacterized protein from Treponema pallidum (strain Nichols).